A 200-amino-acid polypeptide reads, in one-letter code: Peptidyl-tRNA hydrolase (200 aa).

Residue tyrosine 16 coordinates tRNA. The active-site Proton acceptor is the histidine 21. Positions 67, 69, and 115 each coordinate tRNA.

Belongs to the PTH family. In terms of assembly, monomer.

The protein localises to the cytoplasm. The enzyme catalyses an N-acyl-L-alpha-aminoacyl-tRNA + H2O = an N-acyl-L-amino acid + a tRNA + H(+). Hydrolyzes ribosome-free peptidyl-tRNAs (with 1 or more amino acids incorporated), which drop off the ribosome during protein synthesis, or as a result of ribosome stalling. In terms of biological role, catalyzes the release of premature peptidyl moieties from peptidyl-tRNA molecules trapped in stalled 50S ribosomal subunits, and thus maintains levels of free tRNAs and 50S ribosomes. The sequence is that of Peptidyl-tRNA hydrolase from Prochlorococcus marinus (strain AS9601).